The chain runs to 438 residues: GTPase Obg (438 aa).

The Obg domain occupies 2–160 (SMFLDQVTID…RKIELELKVL (159 aa)). The segment at 128-147 (NIRFASPRNPAPEIAENGEP) is disordered. The OBG-type G domain occupies 161-339 (ADVGLVGFPS…LLNATADLLE (179 aa)). Residues 167-174 (GFPSVGKS), 192-196 (FTTLV), 214-217 (DLPG), 284-287 (NKMD), and 320-322 (SGV) contribute to the GTP site. Residues Ser174 and Thr194 each contribute to the Mg(2+) site. Residues 360-438 (GFQPEGPEFT…IGNFEFEFVE (79 aa)) form the OCT domain.

Belongs to the TRAFAC class OBG-HflX-like GTPase superfamily. OBG GTPase family. Monomer. It depends on Mg(2+) as a cofactor.

It is found in the cytoplasm. Functionally, an essential GTPase which binds GTP, GDP and possibly (p)ppGpp with moderate affinity, with high nucleotide exchange rates and a fairly low GTP hydrolysis rate. Plays a role in control of the cell cycle, stress response, ribosome biogenesis and in those bacteria that undergo differentiation, in morphogenesis control. The sequence is that of GTPase Obg from Enterococcus faecalis (strain ATCC 700802 / V583).